Reading from the N-terminus, the 128-residue chain is Large ribosomal subunit protein eL22 (128 aa).

Phosphothreonine is present on threonine 62. Residue serine 66 is modified to Phosphoserine. Lysine 69 carries the N6-succinyllysine modification.

This sequence belongs to the eukaryotic ribosomal protein eL22 family. As to quaternary structure, component of the large ribosomal subunit.

It localises to the cytoplasm. Its function is as follows. Component of the large ribosomal subunit. The ribosome is a large ribonucleoprotein complex responsible for the synthesis of proteins in the cell. This Oryctolagus cuniculus (Rabbit) protein is Large ribosomal subunit protein eL22 (RPL22).